The following is a 93-amino-acid chain: Pyrimidine/purine nucleoside phosphorylase (93 aa).

The protein belongs to the nucleoside phosphorylase PpnP family.

The enzyme catalyses a purine D-ribonucleoside + phosphate = a purine nucleobase + alpha-D-ribose 1-phosphate. It catalyses the reaction adenosine + phosphate = alpha-D-ribose 1-phosphate + adenine. It carries out the reaction cytidine + phosphate = cytosine + alpha-D-ribose 1-phosphate. The catalysed reaction is guanosine + phosphate = alpha-D-ribose 1-phosphate + guanine. The enzyme catalyses inosine + phosphate = alpha-D-ribose 1-phosphate + hypoxanthine. It catalyses the reaction thymidine + phosphate = 2-deoxy-alpha-D-ribose 1-phosphate + thymine. It carries out the reaction uridine + phosphate = alpha-D-ribose 1-phosphate + uracil. The catalysed reaction is xanthosine + phosphate = alpha-D-ribose 1-phosphate + xanthine. In terms of biological role, catalyzes the phosphorolysis of diverse nucleosides, yielding D-ribose 1-phosphate and the respective free bases. Can use uridine, adenosine, guanosine, cytidine, thymidine, inosine and xanthosine as substrates. Also catalyzes the reverse reactions. In Vibrio atlanticus (strain LGP32) (Vibrio splendidus (strain Mel32)), this protein is Pyrimidine/purine nucleoside phosphorylase.